The following is an 89-amino-acid chain: Small ribosomal subunit protein uS15 (89 aa).

This sequence belongs to the universal ribosomal protein uS15 family. In terms of assembly, part of the 30S ribosomal subunit. Forms a bridge to the 50S subunit in the 70S ribosome, contacting the 23S rRNA.

One of the primary rRNA binding proteins, it binds directly to 16S rRNA where it helps nucleate assembly of the platform of the 30S subunit by binding and bridging several RNA helices of the 16S rRNA. Its function is as follows. Forms an intersubunit bridge (bridge B4) with the 23S rRNA of the 50S subunit in the ribosome. This Shewanella woodyi (strain ATCC 51908 / MS32) protein is Small ribosomal subunit protein uS15.